The following is a 244-amino-acid chain: Uridylate kinase (244 aa).

18–21 (KVSG) provides a ligand contact to ATP. A UMP-binding site is contributed by glycine 60. The ATP site is built by glycine 61 and arginine 65. UMP-binding positions include aspartate 80 and 141 to 148 (TGNPFCTT). Residues threonine 168, glutamine 169, tyrosine 174, and aspartate 177 each contribute to the ATP site.

This sequence belongs to the UMP kinase family. Homohexamer.

It is found in the cytoplasm. The enzyme catalyses UMP + ATP = UDP + ADP. It functions in the pathway pyrimidine metabolism; CTP biosynthesis via de novo pathway; UDP from UMP (UMPK route): step 1/1. With respect to regulation, inhibited by UTP. Functionally, catalyzes the reversible phosphorylation of UMP to UDP. This Rickettsia typhi (strain ATCC VR-144 / Wilmington) protein is Uridylate kinase.